The following is a 248-amino-acid chain: Metallo-beta-lactamase type 2 (248 aa).

The signal sequence occupies residues 1–21; sequence MKGLKGLLVLALGFTGLQVFG. 5 residues coordinate Zn(2+): H97, H99, D101, H160, and C179. K182 contributes to the substrate binding site. Position 221 (H221) interacts with Zn(2+).

The protein belongs to the metallo-beta-lactamase superfamily. Class-B beta-lactamase family. Monomer. Requires Zn(2+) as cofactor.

Its subcellular location is the periplasm. The enzyme catalyses a beta-lactam + H2O = a substituted beta-amino acid. Functionally, confers resistance to the different beta-lactams antibiotics (penicillin, cephalosporin and carbapenem) via the hydrolysis of the beta-lactam ring. The protein is Metallo-beta-lactamase type 2 (blaB8) of Elizabethkingia meningoseptica (Chryseobacterium meningosepticum).